The following is a 134-amino-acid chain: D-dopachrome decarboxylase-like protein (134 aa).

The protein belongs to the MIF family.

It is found in the cytoplasm. In terms of biological role, may have lyase activity. The chain is D-dopachrome decarboxylase-like protein (DDTL) from Homo sapiens (Human).